The following is a 121-amino-acid chain: Flagellar protein FliT (121 aa).

Positions 1–50 are required for homodimerization; the sequence is MNHAPHLYFAWQQLVEKSQLMLRLATEEQWDELIASEMAYVNAVQEIAHL. The tract at residues 60-98 is fliD binding; the sequence is MQEQLRPMLRLILDNESKVKQLLQIRMDELAKLVGQSSV.

The protein belongs to the FliT family. Homodimer. Interacts with FliD and FlhC.

It localises to the cytoplasm. The protein localises to the cytosol. In terms of biological role, dual-function protein that regulates the transcription of class 2 flagellar operons and that also acts as an export chaperone for the filament-capping protein FliD. As a transcriptional regulator, acts as an anti-FlhDC factor; it directly binds FlhC, thus inhibiting the binding of the FlhC/FlhD complex to class 2 promoters, resulting in decreased expression of class 2 flagellar operons. As a chaperone, effects FliD transition to the membrane by preventing its premature polymerization, and by directing it to the export apparatus. The sequence is that of Flagellar protein FliT from Escherichia coli (strain ATCC 8739 / DSM 1576 / NBRC 3972 / NCIMB 8545 / WDCM 00012 / Crooks).